Consider the following 62-residue polypeptide: Mu-elapitoxin-Na1a (62 aa).

Intrachain disulfides connect Cys-3-Cys-22, Cys-15-Cys-40, Cys-44-Cys-55, and Cys-56-Cys-61.

This sequence belongs to the three-finger toxin family. Short-chain subfamily. Orphan group XV sub-subfamily. In terms of tissue distribution, expressed by the venom gland.

The protein localises to the secreted. Its function is as follows. Potent inhibitor of human Nav1.8/SCN10A (IC(50)=141-380 nM). Is highly selective for this channel and acts in a reversible manner. Shows a depolarizing shift of activation and hyperpolarizing shift of inactivation. In contrast to the very similar cytotoxin A5 (AC P62375), does not seem to bind integrin alpha-V/beta-3, since it does not promote or inhibit the proliferation of HUVECs and C-PAE cells. In vivo, in rodent models of inflammatory and neuropathic pain, it alleviates nociceptive behaviors more potently than does morphine. It displays no evident cytotoxic, hemolytic and cardiotoxic activities and produces no obvious adverse responses in mice even at a dose 30-fold higher than that producing a significant analgesic effect. This is Mu-elapitoxin-Na1a from Naja atra (Chinese cobra).